Reading from the N-terminus, the 442-residue chain is U11/U12 small nuclear ribonucleoprotein 65 kDa protein (442 aa).

In terms of domain architecture, RRM 1 spans 28 to 102 (VTLLVRHLPD…KVLQVQRANK (75 aa)). 3 disordered regions span residues 101 to 138 (NKPN…QILS), 200 to 242 (LALP…GRKR), and 290 to 317 (SKVT…DSNL). A compositionally biased stretch (basic and acidic residues) spans 102–116 (KPNDNKKSRQIEESV). Residues 117-136 (TKGNAFSTVSTNNDSKSGQI) are compositionally biased toward polar residues. The segment covering 200 to 209 (LALPTPPLPK) has biased composition (pro residues). The segment covering 297-307 (YKEESENEDPA) has biased composition (acidic residues). An RRM 2 domain is found at 352–434 (VVLYIKNLAK…KPMIIQFGRT (83 aa)).

In terms of assembly, component of the U11/U12 snRNPs that are part of the U12-type spliceosome. Forms a complex with U12 snRNA. As to expression, ubiquitous.

It is found in the nucleus. Its function is as follows. Component of minor spliceosome required for U12-type intron splicing and alternative splicing of many introns. Binds specifically to U12 snRNA, which is necessary for branch-point site recognition. Required for normal plant development. This is U11/U12 small nuclear ribonucleoprotein 65 kDa protein (SNRNP65) from Arabidopsis thaliana (Mouse-ear cress).